The following is a 240-amino-acid chain: Serine protease SplB (240 aa).

Positions 1–36 (MNKNVVIKSLAALTILTSVTGIGITLVEEVQQTAKA) are cleaved as a signal peptide. Residues histidine 75, aspartate 113, and serine 193 each act as charge relay system in the active site.

It belongs to the peptidase S1B family.

It is found in the secreted. Serine protease that cleaves specifically after the sequence Trp-Glu-Leu-Gln. The protein is Serine protease SplB (splB) of Staphylococcus aureus (strain MW2).